Consider the following 143-residue polypeptide: Large ribosomal subunit protein uL13 (143 aa).

It belongs to the universal ribosomal protein uL13 family. As to quaternary structure, part of the 50S ribosomal subunit.

Functionally, this protein is one of the early assembly proteins of the 50S ribosomal subunit, although it is not seen to bind rRNA by itself. It is important during the early stages of 50S assembly. This chain is Large ribosomal subunit protein uL13, found in Chloroflexus aggregans (strain MD-66 / DSM 9485).